The sequence spans 112 residues: UPF0145 protein CD630_17110 (112 aa).

It belongs to the UPF0145 family.

This chain is UPF0145 protein CD630_17110, found in Clostridioides difficile (strain 630) (Peptoclostridium difficile).